Here is a 2465-residue protein sequence, read N- to C-terminus: Protein DOP1A (2465 aa).

Disordered regions lie at residues 559-600, 625-646, and 705-733; these read PSGQ…SSES, GAAAIPIGSTSSETETASTVGS, and TEHQGDLGREQGETSKWDRNSQGDVKEKN. Over residues 633 to 646 the composition is skewed to low complexity; the sequence is STSSETETASTVGS. A compositionally biased stretch (basic and acidic residues) spans 707–733; it reads HQGDLGREQGETSKWDRNSQGDVKEKN. Ser1266 carries the phosphoserine modification. 2 stretches are compositionally biased toward basic and acidic residues: residues 1282–1291 and 1305–1315; these read EKETIVKESG and KKDDDKKKSSN. Residues 1282–1315 are disordered; sequence EKETIVKESGKQPGAKPKVKLARKKDDDKKKSSN.

Belongs to the DOP1 family.

The protein resides in the golgi apparatus membrane. Its function is as follows. May be involved in protein traffic between late Golgi and early endosomes. In Homo sapiens (Human), this protein is Protein DOP1A.